The chain runs to 170 residues: Translocon-associated protein subunit gamma (170 aa).

Topologically, residues 1 to 24 are lumenal; it reads MAEVDEFSAFRHENDVSIEQRIVY. The chain crosses the membrane as a helical span at residues 25-45; sequence FINSLIVALVPVYLYHAIFFM. Residues 46–51 are Cytoplasmic-facing; sequence SIDDHM. A helical membrane pass occupies residues 52 to 72; sequence IIYGSVTLFAAIVLTFAYNNI. Residues 73–121 lie on the Lumenal side of the membrane; sequence YRMKRLKLSASREHISIASKNKVGDKKKFAAAQKEVQALVTSHEAIAAS. A helical membrane pass occupies residues 122–141; it reads IMYNNAVFLICVSIFSFIIF. The Cytoplasmic segment spans residues 142–145; it reads KNVP. Residues 146–168 traverse the membrane as a helical segment; sequence LVYNYIISISLGAGLTSFLSTSS.

This sequence belongs to the TRAP-gamma family. In terms of assembly, heterotrimer of TRAP-alpha, TRAP-beta and TRAP-gamma.

The protein resides in the endoplasmic reticulum membrane. Its function is as follows. TRAP proteins are part of a complex whose function is to bind calcium to the ER membrane and thereby regulate the retention of ER resident proteins. The polypeptide is Translocon-associated protein subunit gamma (ssr3) (Dictyostelium discoideum (Social amoeba)).